The following is a 132-amino-acid chain: Small ribosomal subunit protein uS8 (132 aa).

Belongs to the universal ribosomal protein uS8 family. Part of the 30S ribosomal subunit. Contacts proteins S5 and S12.

In terms of biological role, one of the primary rRNA binding proteins, it binds directly to 16S rRNA central domain where it helps coordinate assembly of the platform of the 30S subunit. In Geobacter sulfurreducens (strain ATCC 51573 / DSM 12127 / PCA), this protein is Small ribosomal subunit protein uS8.